The chain runs to 24 residues: U1-poneritoxin-Na1a (24 aa).

It belongs to the non-disulfide-bridged peptide (NDBP) superfamily. Medium-length antimicrobial peptide (group 3) family. Ponericin-W subfamily. In terms of tissue distribution, expressed by the venom gland.

Its subcellular location is the secreted. It is found in the target cell membrane. Functionally, has a broad spectrum of activity against both Gram-positive and Gram-negative bacteria and S.cerevisiae. Has insecticidal and hemolytic activities. May act by disrupting the integrity of the bacterial cell membrane. The protein is U1-poneritoxin-Na1a of Neoponera apicalis (Ant).